Consider the following 167-residue polypeptide: uncharacterized protein (167 aa).

This is an uncharacterized protein from Xenopus laevis (African clawed frog).